A 237-amino-acid polypeptide reads, in one-letter code: Phosphoribosylaminoimidazole-succinocarboxamide synthase (237 aa).

Belongs to the SAICAR synthetase family.

The enzyme catalyses 5-amino-1-(5-phospho-D-ribosyl)imidazole-4-carboxylate + L-aspartate + ATP = (2S)-2-[5-amino-1-(5-phospho-beta-D-ribosyl)imidazole-4-carboxamido]succinate + ADP + phosphate + 2 H(+). Its pathway is purine metabolism; IMP biosynthesis via de novo pathway; 5-amino-1-(5-phospho-D-ribosyl)imidazole-4-carboxamide from 5-amino-1-(5-phospho-D-ribosyl)imidazole-4-carboxylate: step 1/2. In Escherichia coli O127:H6 (strain E2348/69 / EPEC), this protein is Phosphoribosylaminoimidazole-succinocarboxamide synthase.